The following is an 816-amino-acid chain: Mechanosensitive cation channel TMEM63B (816 aa).

Topologically, residues 1-46 (MLPYVIATLGSAGSTCKASTCSNSTKDYCYSARIRSTVLQGLPFGG) are extracellular. Residues 47–71 (VPTVLALDFMCFLALLFVFSILRKV) form a helical membrane-spanning segment. S-palmitoyl cysteine attachment occurs at residues C57 and C119. Residues 72-138 (AWDYGRLALV…KDDEIRDKCG (67 aa)) are Cytoplasmic-facing. The helical transmembrane segment at 139–171 (GDAVHYLSFQRHIIGLLVAVGVLSVGIVLPVNF) threads the bilayer. Residues 172–195 (SGDLLENNAYSFGRTTIANLNSGN) are Extracellular-facing. Residues 196 to 220 (NLLWLHTSFAFLYLLLTVYSMRRHT) traverse the membrane as a helical segment. Topologically, residues 221 to 420 (SKMRYKEDDL…IYWEHLSIRG (200 aa)) are cytoplasmic. The segment at 224-419 (RYKEDDLVKR…NIYWEHLSIR (196 aa)) is intracellular linker IL2; confers mechanosensitivity. Residues C375 and C391 are each lipidated (S-palmitoyl cysteine). Residues 421–450 (FIWWIRCLVINVVLFILLFFLTTPAIIITT) form a helical membrane-spanning segment. Residues 451-465 (MDKFNVTKPVEYLNN) lie on the Extracellular side of the membrane. Residues 466–495 (PIITQFFPTLLLWCFSALLPTIVYYSAFFE) traverse the membrane as a helical segment. At 496–499 (AHWT) the chain is on the cytoplasmic side. Residues 500 to 536 (RSGENRTTMHKCYTFLIFMVLLLPSLGLSSLDVFFRW) form a helical membrane-spanning segment. Topologically, residues 537–559 (LFDKKFLAEAAVRFECVFLPDNG) are extracellular. Residues 560–592 (AFFVNYVIASAFIGNAMDLLRIPGLLMYMIRLC) traverse the membrane as a helical segment. The tract at residues 560 to 592 (AFFVNYVIASAFIGNAMDLLRIPGLLMYMIRLC) is gating helix. Residues 593-612 (LARSAAERRNVKRHQAYEFQ) are Cytoplasmic-facing. Residues 613-631 (FGAAYAWMMCVFTVVMTYS) traverse the membrane as a helical segment. The Extracellular segment spans residues 632 to 634 (ITC). The helical transmembrane segment at 635-659 (PIIVPFGLMYMLLKHLVDRYNLYYA) threads the bilayer. Residues 660 to 666 (YLPAKLD) are Cytoplasmic-facing. A helical transmembrane segment spans residues 667 to 695 (KKIHSGAVNQVVAAPILCLFWLLFFSTMR). At 696-700 (TGFLA) the chain is on the extracellular side. Residues 701–721 (PTSMFTFVVLVITIVICLCHV) traverse the membrane as a helical segment. S-palmitoyl cysteine attachment occurs at residues C719 and C722. The Cytoplasmic segment spans residues 722–816 (CFGHFKYLSA…DSLIENEIRQ (95 aa)).

This sequence belongs to the CSC1 (TC 1.A.17) family. As to quaternary structure, monomer. In terms of processing, palmitoylation is required for localization to the plasma membrane and stability.

The protein localises to the cell membrane. It is found in the lysosome membrane. The protein resides in the early endosome membrane. The catalysed reaction is Ca(2+)(in) = Ca(2+)(out). It catalyses the reaction Mg(2+)(in) = Mg(2+)(out). It carries out the reaction K(+)(in) = K(+)(out). The enzyme catalyses Na(+)(in) = Na(+)(out). The catalysed reaction is Cs(+)(in) = Cs(+)(out). In terms of biological role, mechanosensitive cation channel with low conductance and high activation threshold. Osmosensitive cation channel preferentially activated by hypotonic stress. Also acts as a phospholipid scramblase in response to changes in membrane structure: upon changes in membrane curvature and thickness, alters its conformation and translocates phospholipids, thereby controlling plasma membrane lipid distribution. This chain is Mechanosensitive cation channel TMEM63B, found in Gallus gallus (Chicken).